The primary structure comprises 678 residues: Dol-P-Man:Man(7)GlcNAc(2)-PP-Dol alpha-1,6-mannosyltransferase (678 aa).

The next 11 helical transmembrane spans lie at 1–21 (MDIL…FTKV), 56–76 (FIGP…FETL), 81–101 (FWAQ…AWNS), 109–129 (IYGV…FHFM), 133–153 (TRPL…AYWL), 168–188 (ILVF…VSLL), 200–220 (VALP…SFFW), 252–272 (FYSA…IGVA), 279–299 (PLVL…HKEL), 301–321 (FIIY…QRIW), and 334–354 (ALAC…LLVI).

This sequence belongs to the glycosyltransferase 22 family.

The protein localises to the endoplasmic reticulum membrane. The catalysed reaction is an alpha-D-Man-(1-&gt;2)-alpha-D-Man-(1-&gt;2)-alpha-D-Man-(1-&gt;3)-[alpha-D-Man-(1-&gt;2)-alpha-D-Man-(1-&gt;3)-alpha-D-Man-(1-&gt;6)]-beta-D-Man-(1-&gt;4)-beta-D-GlcNAc-(1-&gt;4)-alpha-D-GlcNAc-diphospho-di-trans,poly-cis-dolichol + a di-trans,poly-cis-dolichyl beta-D-mannosyl phosphate = an alpha-D-Man-(1-&gt;2)-alpha-D-Man-(1-&gt;2)-alpha-D-Man-(1-&gt;3)-[alpha-D-Man-(1-&gt;2)-alpha-D-Man-(1-&gt;3)-[alpha-D-Man-(1-&gt;6)]-alpha-D-Man-(1-&gt;6)]-beta-D-Man-(1-&gt;4)-beta-D-GlcNAc-(1-&gt;4)-alpha-D-GlcNAc-diphospho-di-trans,poly-cis-dolichol + a di-trans,poly-cis-dolichyl phosphate + H(+). The protein operates within protein modification; protein glycosylation. Functionally, mannosyltransferase that operates in the biosynthetic pathway of dolichol-linked oligosaccharides, the glycan precursors employed in protein asparagine (N)-glycosylation. The assembly of dolichol-linked oligosaccharides begins on the cytosolic side of the endoplasmic reticulum membrane and finishes in its lumen. The sequential addition of sugars to dolichol pyrophosphate produces dolichol-linked oligosaccharides containing fourteen sugars, including two GlcNAcs, nine mannoses and three glucoses. Once assembled, the oligosaccharide is transferred from the lipid to nascent proteins by oligosaccharyltransferases. In the lumen of the endoplasmic reticulum, adds the eighth mannose residue in an alpha-1,6 linkage onto Man(7)GlcNAc(2)-PP-dolichol to produce Man(8)GlcNAc(2)-PP-dolichol. This is Dol-P-Man:Man(7)GlcNAc(2)-PP-Dol alpha-1,6-mannosyltransferase from Drosophila melanogaster (Fruit fly).